The following is a 166-amino-acid chain: Succinate dehydrogenase [ubiquinone] cytochrome b small subunit, mitochondrial (166 aa).

Residues 1–65 lie on the Mitochondrial matrix side of the membrane; it reads MASVARSSAL…VPPPSPSHGS (65 aa). The helical transmembrane segment at 66–87 threads the bilayer; sequence YHWTFDRVVAAGLIPLTVAPFA. At 88–94 the chain is on the mitochondrial intermembrane side; the sequence is AGSLNPT. A helical transmembrane segment spans residues 95–115; that stretch reads MDAVLAATILIHSHTGFGNII. H106 contacts heme. The Mitochondrial matrix portion of the chain corresponds to 116 to 124; sequence VDYVPSKRV. Residue Y118 coordinates a ubiquinone. A helical transmembrane segment spans residues 125–149; it reads PKARKVFTWGLNAATVLVGLALYEF. Over 150–166 the chain is Mitochondrial intermembrane; that stretch reads ETTDVGLTETIKRVWKA.

The protein belongs to the CybS family. Forms part of complex II containing four subunits: a flavoprotein (FP), an iron-sulfur protein (IP) and a cytochrome b composed of a large and a small subunit.

It localises to the mitochondrion inner membrane. It functions in the pathway carbohydrate metabolism; tricarboxylic acid cycle. Membrane-anchoring subunit of succinate dehydrogenase (SDH) that is involved in complex II of the mitochondrial electron transport chain and is responsible for transferring electrons from succinate to ubiquinone (coenzyme Q). The sequence is that of Succinate dehydrogenase [ubiquinone] cytochrome b small subunit, mitochondrial from Neurospora crassa (strain ATCC 24698 / 74-OR23-1A / CBS 708.71 / DSM 1257 / FGSC 987).